A 192-amino-acid chain; its full sequence is Ribonuclease HII (192 aa).

Positions 2-187 constitute an RNase H type-2 domain; that stretch reads KNLCGIDEAG…KALGENEIGV (186 aa). Residues Asp8, Glu9, and Asp97 each contribute to the a divalent metal cation site.

The protein belongs to the RNase HII family. Mn(2+) is required as a cofactor. The cofactor is Mg(2+).

The protein resides in the cytoplasm. It carries out the reaction Endonucleolytic cleavage to 5'-phosphomonoester.. Endonuclease that specifically degrades the RNA of RNA-DNA hybrids. This Aliarcobacter butzleri (strain RM4018) (Arcobacter butzleri) protein is Ribonuclease HII.